Reading from the N-terminus, the 340-residue chain is Putative 2-hydroxyacid dehydrogenase C1773.17c (340 aa).

NAD(+)-binding positions include 169 to 170 (AI), 249 to 251 (TAR), and Asp-275. The active site involves Arg-251. Glu-280 is a catalytic residue. Catalysis depends on His-298, which acts as the Proton donor. 298-301 (HCGV) provides a ligand contact to NAD(+).

This sequence belongs to the D-isomer specific 2-hydroxyacid dehydrogenase family.

This is Putative 2-hydroxyacid dehydrogenase C1773.17c from Schizosaccharomyces pombe (strain 972 / ATCC 24843) (Fission yeast).